We begin with the raw amino-acid sequence, 401 residues long: Formate-dependent phosphoribosylglycinamide formyltransferase (401 aa).

N(1)-(5-phospho-beta-D-ribosyl)glycinamide-binding positions include 27–28 (EL) and glutamate 87. ATP-binding positions include arginine 119, lysine 160, 165 to 170 (SSGKGQ), 200 to 203 (EELV), and glutamate 208. Residues 124 to 313 (EFAAEEVGVT…QFDLHLRAIL (190 aa)) form the ATP-grasp domain. 2 residues coordinate Mg(2+): glutamate 272 and glutamate 284. Residues aspartate 291, lysine 361, and 368–369 (RR) each bind N(1)-(5-phospho-beta-D-ribosyl)glycinamide.

The protein belongs to the PurK/PurT family. Homodimer.

The enzyme catalyses N(1)-(5-phospho-beta-D-ribosyl)glycinamide + formate + ATP = N(2)-formyl-N(1)-(5-phospho-beta-D-ribosyl)glycinamide + ADP + phosphate + H(+). It participates in purine metabolism; IMP biosynthesis via de novo pathway; N(2)-formyl-N(1)-(5-phospho-D-ribosyl)glycinamide from N(1)-(5-phospho-D-ribosyl)glycinamide (formate route): step 1/1. Functionally, involved in the de novo purine biosynthesis. Catalyzes the transfer of formate to 5-phospho-ribosyl-glycinamide (GAR), producing 5-phospho-ribosyl-N-formylglycinamide (FGAR). Formate is provided by PurU via hydrolysis of 10-formyl-tetrahydrofolate. The polypeptide is Formate-dependent phosphoribosylglycinamide formyltransferase (Haloquadratum walsbyi (strain DSM 16790 / HBSQ001)).